The chain runs to 1318 residues: Major tegument protein (1318 aa).

The protein belongs to the herpesviridae MTP family. Interacts with host DAXX; this interaction disrupts the chromatin remodeling complex ATRX:DAXX and thus allows viral transcription. Interacts with host SMC6; this interaction targets SMC5-SMC6 complex for proteasomal degradation.

The protein localises to the virion tegument. It localises to the host nucleus. Tegument protein that plays a role in the inhibition of host intrinsic defenses to promote viral early gene activation. Interacts with host DAXX and thereby disrupts the complex between DAXX and ATRX. Suppresses the DAXX-ATRX dependent deposition of histone H3.3 on viral chromatin allowing viral transcription. Targets also host SMC5/6 for proteasomal degradation in a CUL7 and calpain-dependent manner to support nuclear membrane-less replication compartment formation and lytic virus replication. This Homo sapiens (Human) protein is Major tegument protein.